The sequence spans 127 residues: Large ribosomal subunit protein bL12 (127 aa).

Positions 96–127 (GTPSTLKEAVSKDDAEEAAKQLKEAGAEVEVK) are disordered. The segment covering 104–127 (AVSKDDAEEAAKQLKEAGAEVEVK) has biased composition (basic and acidic residues).

It belongs to the bacterial ribosomal protein bL12 family. In terms of assembly, homodimer. Part of the ribosomal stalk of the 50S ribosomal subunit. Forms a multimeric L10(L12)X complex, where L10 forms an elongated spine to which 2 to 4 L12 dimers bind in a sequential fashion. Binds GTP-bound translation factors.

Forms part of the ribosomal stalk which helps the ribosome interact with GTP-bound translation factors. Is thus essential for accurate translation. The chain is Large ribosomal subunit protein bL12 from Oleidesulfovibrio alaskensis (strain ATCC BAA-1058 / DSM 17464 / G20) (Desulfovibrio alaskensis).